The chain runs to 591 residues: Probable sulfoacetaldehyde acetyltransferase (591 aa).

The disordered stretch occupies residues 359-383 (MDHEDDDPGTEWNVGARQREPDRMS).

The protein belongs to the TPP enzyme family. The cofactor is Mg(2+). Thiamine diphosphate is required as a cofactor.

The protein localises to the cytoplasm. It catalyses the reaction acetyl phosphate + sulfite + H(+) = sulfoacetaldehyde + phosphate. It participates in organosulfur degradation; taurine degradation via aerobic pathway; acetyl phosphate and sulfite from taurine: step 2/2. This chain is Probable sulfoacetaldehyde acetyltransferase (xsc), found in Rhizobium meliloti (strain 1021) (Ensifer meliloti).